Here is a 365-residue protein sequence, read N- to C-terminus: Succinyl-diaminopimelate desuccinylase (365 aa).

H65 contributes to the Zn(2+) binding site. The active site involves D67. D96 provides a ligand contact to Zn(2+). Catalysis depends on E126, which acts as the Proton acceptor. 3 residues coordinate Zn(2+): E127, E155, and H340.

It belongs to the peptidase M20A family. DapE subfamily. In terms of assembly, homodimer. Zn(2+) is required as a cofactor. It depends on Co(2+) as a cofactor.

It carries out the reaction N-succinyl-(2S,6S)-2,6-diaminopimelate + H2O = (2S,6S)-2,6-diaminopimelate + succinate. The protein operates within amino-acid biosynthesis; L-lysine biosynthesis via DAP pathway; LL-2,6-diaminopimelate from (S)-tetrahydrodipicolinate (succinylase route): step 3/3. Functionally, catalyzes the hydrolysis of N-succinyl-L,L-diaminopimelic acid (SDAP), forming succinate and LL-2,6-diaminopimelate (DAP), an intermediate involved in the bacterial biosynthesis of lysine and meso-diaminopimelic acid, an essential component of bacterial cell walls. This chain is Succinyl-diaminopimelate desuccinylase, found in Campylobacter jejuni subsp. jejuni serotype O:23/36 (strain 81-176).